The primary structure comprises 323 residues: Large ribosomal subunit protein uL10x (323 aa).

Residues 287–323 (DAGGGSAQAGAAAKVEEKKEESDEEDYEGGFGLFDEE) form a disordered region. Ser308 is modified (phosphoserine). The span at 308–323 (SDEEDYEGGFGLFDEE) shows a compositional bias: acidic residues. Position 313 is a phosphotyrosine (Tyr313).

The protein belongs to the universal ribosomal protein uL10 family. In terms of assembly, P0 forms a pentameric complex by interaction with dimers of P1 and P2.

In terms of biological role, ribosomal protein P0 is the functional equivalent of E.coli protein L10. The sequence is that of Large ribosomal subunit protein uL10x (RPP0C) from Arabidopsis thaliana (Mouse-ear cress).